We begin with the raw amino-acid sequence, 229 residues long: Dihydrofolate reductase (229 aa).

A DHFR domain is found at 11–227 (SITAVVAATA…VKYIFEMWVL (217 aa)). NADP(+) is bound by residues alanine 17 and 23-29 (GIGLNGG). Residue 37 to 42 (EMKYFA) participates in substrate binding. 64-66 (RKT) is an NADP(+) binding site. Residue arginine 80 participates in substrate binding. NADP(+) contacts are provided by residues 86–88 (SGK) and 127–134 (GGATLYTS).

Belongs to the dihydrofolate reductase family. As to quaternary structure, monomer.

It catalyses the reaction (6S)-5,6,7,8-tetrahydrofolate + NADP(+) = 7,8-dihydrofolate + NADPH + H(+). Its pathway is cofactor biosynthesis; tetrahydrofolate biosynthesis; 5,6,7,8-tetrahydrofolate from 7,8-dihydrofolate: step 1/1. In terms of biological role, key enzyme in folate metabolism. Catalyzes an essential reaction for de novo glycine and purine synthesis, and for DNA precursor synthesis. This chain is Dihydrofolate reductase (DFR1), found in Cryptococcus neoformans var. neoformans serotype D (strain JEC21 / ATCC MYA-565) (Filobasidiella neoformans).